The sequence spans 318 residues: tRNA-cytidine(32) 2-sulfurtransferase (318 aa).

A PP-loop motif motif is present at residues 65 to 70; the sequence is SGGKDS. Residues Cys-140, Cys-143, and Cys-231 each coordinate [4Fe-4S] cluster.

This sequence belongs to the TtcA family. Homodimer. The cofactor is Mg(2+). [4Fe-4S] cluster serves as cofactor.

It is found in the cytoplasm. It carries out the reaction cytidine(32) in tRNA + S-sulfanyl-L-cysteinyl-[cysteine desulfurase] + AH2 + ATP = 2-thiocytidine(32) in tRNA + L-cysteinyl-[cysteine desulfurase] + A + AMP + diphosphate + H(+). Its pathway is tRNA modification. Its function is as follows. Catalyzes the ATP-dependent 2-thiolation of cytidine in position 32 of tRNA, to form 2-thiocytidine (s(2)C32). The sulfur atoms are provided by the cysteine/cysteine desulfurase (IscS) system. This Herminiimonas arsenicoxydans protein is tRNA-cytidine(32) 2-sulfurtransferase.